Consider the following 40-residue polypeptide: Natriuretic peptide PpNP-a (40 aa).

Positions 1–8 are excised as a propeptide; sequence SGSKTANI. The interval 1–40 is disordered; that stretch reads SGSKTANIGDGCFGVPIDHIGSTSGMGCGSPRPKPTPGGS. The cysteines at positions 12 and 28 are disulfide-linked.

This sequence belongs to the natriuretic peptide family. Expressed by the venom gland.

It localises to the secreted. Its function is as follows. Snake venom natriuretic peptide that targets both NPR1 and NPR2. Exhibits hypotensive and vasodepressor activities. The polypeptide is Natriuretic peptide PpNP-a (Pseudechis porphyriacus (Red-bellied black snake)).